Consider the following 608-residue polypeptide: Glutamyl-tRNA(Gln) amidotransferase subunit E (608 aa).

Positions 401 to 428 are disordered; it reads PEETRAANPDGTTRFLRPRPGAARMYPE.

This sequence belongs to the GatB/GatE family. GatE subfamily. As to quaternary structure, heterodimer of GatD and GatE.

It carries out the reaction L-glutamyl-tRNA(Gln) + L-glutamine + ATP + H2O = L-glutaminyl-tRNA(Gln) + L-glutamate + ADP + phosphate + H(+). In terms of biological role, allows the formation of correctly charged Gln-tRNA(Gln) through the transamidation of misacylated Glu-tRNA(Gln) in organisms which lack glutaminyl-tRNA synthetase. The reaction takes place in the presence of glutamine and ATP through an activated gamma-phospho-Glu-tRNA(Gln). The GatDE system is specific for glutamate and does not act on aspartate. The chain is Glutamyl-tRNA(Gln) amidotransferase subunit E from Pyrobaculum arsenaticum (strain DSM 13514 / JCM 11321 / PZ6).